The primary structure comprises 45 residues: Large ribosomal subunit protein bL34 (45 aa).

The protein belongs to the bacterial ribosomal protein bL34 family.

The polypeptide is Large ribosomal subunit protein bL34 (Kocuria rhizophila (strain ATCC 9341 / DSM 348 / NBRC 103217 / DC2201)).